A 294-amino-acid polypeptide reads, in one-letter code: rRNA 2'-O-methyltransferase fibrillarin (294 aa).

A disordered region spans residues 1 to 62 (MGKDFKSGGG…GKFGAKGPRG (62 aa)). Positions 20–56 (GPGGPGGRPFNKGPGGPGGPGGKFGGGRPGGPGGKFG) are enriched in gly residues. Arg-27, Arg-47, and Arg-61 each carry asymmetric dimethylarginine. S-adenosyl-L-methionine-binding positions include 151-152 (TT), 170-171 (EF), 195-196 (DA), and 215-218 (DVAQ).

The protein belongs to the methyltransferase superfamily. Fibrillarin family. As to quaternary structure, component of box C/D small nucleolar ribonucleoprotein (snoRNP) particles. It is associated with the U3, U8 and U13 small nuclear RNAs. In terms of processing, by homology to other fibrillarins, some or all of the N-terminal domain arginines are modified to asymmetric dimethylarginine (DMA).

The protein localises to the nucleus. The protein resides in the nucleolus. The enzyme catalyses L-glutaminyl-[histone H2A] + S-adenosyl-L-methionine = N(5)-methyl-L-glutaminyl-[histone H2A] + S-adenosyl-L-homocysteine + H(+). S-adenosyl-L-methionine-dependent methyltransferase that has the ability to methylate both RNAs and proteins. Involved in pre-rRNA processing. Utilizes the methyl donor S-adenosyl-L-methionine to catalyze the site-specific 2'-hydroxyl methylation of ribose moieties in pre-ribosomal RNA. Site specificity is provided by a guide RNA that base pairs with the substrate. Methylation occurs at a characteristic distance from the sequence involved in base pairing with the guide RNA. Also acts as a protein methyltransferase by mediating methylation of 'Gln-105' of histone H2A (H2AQ105me), a modification that impairs binding of the FACT complex and is specifically present at 35S ribosomal DNA locus. This Tetrahymena thermophila protein is rRNA 2'-O-methyltransferase fibrillarin (FIB).